Consider the following 91-residue polypeptide: Acylphosphatase (91 aa).

An Acylphosphatase-like domain is found at C3 to H91. Active-site residues include R18 and N36.

This sequence belongs to the acylphosphatase family.

It catalyses the reaction an acyl phosphate + H2O = a carboxylate + phosphate + H(+). In Dehalococcoides mccartyi (strain ATCC BAA-2100 / JCM 16839 / KCTC 5957 / BAV1), this protein is Acylphosphatase (acyP).